Consider the following 558-residue polypeptide: Leucine-rich repeat-containing protein 71 (558 aa).

Residues 1–18 (MSSEPSTTGTSPRTPRPG) are compositionally biased toward low complexity. Disordered regions lie at residues 1 to 55 (MSSE…NPEE) and 86 to 112 (RVQQSSVPSASTSEKPVLDDQRPSASC). The span at 28-38 (KKGDRAAKDKT) shows a compositional bias: basic and acidic residues. Over residues 86-99 (RVQQSSVPSASTSE) the composition is skewed to polar residues. 4 LRR repeats span residues 196–216 (TLRKVSLEGNPIPEQSFSKLM), 221–241 (TIVHLSLRNNNINDHGAQLLG), 253–274 (TLVSLNLAFNHIGDVGAGYIAD), and 281–302 (SLLWLSLAHNHIQDKGALKLAE). The disordered stretch occupies residues 325–415 (GTQERSRSPS…DAAKAGKGKV (91 aa)). 2 stretches are compositionally biased toward basic and acidic residues: residues 339–348 (GDSKAEREKS) and 380–391 (KTGEVVKKEEKL).

The sequence is that of Leucine-rich repeat-containing protein 71 (Lrrc71) from Mus musculus (Mouse).